The following is a 194-amino-acid chain: dTTP/UTP pyrophosphatase (194 aa).

D73 acts as the Proton acceptor in catalysis.

It belongs to the Maf family. YhdE subfamily. Requires a divalent metal cation as cofactor.

The protein resides in the cytoplasm. It carries out the reaction dTTP + H2O = dTMP + diphosphate + H(+). The enzyme catalyses UTP + H2O = UMP + diphosphate + H(+). Functionally, nucleoside triphosphate pyrophosphatase that hydrolyzes dTTP and UTP. May have a dual role in cell division arrest and in preventing the incorporation of modified nucleotides into cellular nucleic acids. In Clostridium botulinum (strain Loch Maree / Type A3), this protein is dTTP/UTP pyrophosphatase.